Consider the following 365-residue polypeptide: Sulfate/thiosulfate import ATP-binding protein CysA (365 aa).

The 235-residue stretch at 3 to 237 (IEIANIKKSF…PATRFVLEFM (235 aa)) folds into the ABC transporter domain. 35-42 (GPSGSGKT) serves as a coordination point for ATP.

The protein belongs to the ABC transporter superfamily. Sulfate/tungstate importer (TC 3.A.1.6) family. In terms of assembly, the complex is composed of two ATP-binding proteins (CysA), two transmembrane proteins (CysT and CysW) and a solute-binding protein (CysP).

It is found in the cell inner membrane. The catalysed reaction is sulfate(out) + ATP + H2O = sulfate(in) + ADP + phosphate + H(+). It catalyses the reaction thiosulfate(out) + ATP + H2O = thiosulfate(in) + ADP + phosphate + H(+). Functionally, part of the ABC transporter complex CysAWTP involved in sulfate/thiosulfate import. Responsible for energy coupling to the transport system. The protein is Sulfate/thiosulfate import ATP-binding protein CysA of Escherichia coli (strain K12).